A 375-amino-acid polypeptide reads, in one-letter code: Neuropeptide Y receptor type 4 (375 aa).

Residues 1–39 (MNTSHLMASLSPAFLQGKNGTNPLDSLYNLSDGCQDSAD) lie on the Extracellular side of the membrane. 3 N-linked (GlcNAc...) asparagine glycosylation sites follow: Asn-2, Asn-19, and Asn-29. Residues 40-60 (LLAFIITTYSVETVLGVLGNL) traverse the membrane as a helical segment. Residues 61–78 (CLIFVTTRQKEKSNVTNL) are Cytoplasmic-facing. Residues 79–99 (LIANLAFSDFLMCLICQPLTV) traverse the membrane as a helical segment. Residues 100–116 (TYTIMDYWIFGEVLCKM) are Extracellular-facing. An intrachain disulfide couples Cys-114 to Cys-201. Residues 117–137 (LTFIQCMSVTVSILSLVLVAL) traverse the membrane as a helical segment. The Cytoplasmic segment spans residues 138 to 155 (ERHQLIINPTGWKPSISQ). The chain crosses the membrane as a helical span at residues 156–176 (AYLGIVVIWFISCFLSLPFLA). The Extracellular portion of the chain corresponds to 177-211 (NSILNDLFHYNHSKVVEFLEDKVVCFVSWSSDHHR). Asn-187 carries N-linked (GlcNAc...) asparagine glycosylation. A helical transmembrane segment spans residues 212 to 232 (LIYTTFLLLFQYCVPLAFILV). At 233–262 (CYMRIYQRLQRQRRAFHTHTCSSRVGQMKR) the chain is on the cytoplasmic side. The chain crosses the membrane as a helical span at residues 263-283 (INGMLMAMVTAFAVLWLPLHV). Residues 284 to 301 (FNTLEDWYQEAIPACHGN) lie on the Extracellular side of the membrane. The helical transmembrane segment at 302-322 (LIFLMCHLFAMASTCVNPFIY) threads the bilayer. Residues 323–375 (GFLNINFKKDIKALVLTCRCRPPQGEPEPLPLSTVHTDLSKGSMRMGSKSNVM) are Cytoplasmic-facing. A lipid anchor (S-palmitoyl cysteine) is attached at Cys-340.

This sequence belongs to the G-protein coupled receptor 1 family. In terms of tissue distribution, detected in colon and brain.

Its subcellular location is the cell membrane. In terms of biological role, g protein-coupled receptor for PPY/pancreatic polypeptide/PP that is negatively coupled to cAMP. Has much lower affinity for the NPY/neuropeptide Y and PYY/peptide YY. The polypeptide is Neuropeptide Y receptor type 4 (Npy4r) (Rattus norvegicus (Rat)).